Here is a 324-residue protein sequence, read N- to C-terminus: Sex-lethal homolog (324 aa).

2 consecutive RRM domains span residues 102 to 180 (TNLI…YARP) and 188 to 268 (TNLY…LAEE).

Expressed in somatic cells of both sexes throughout development, but not in the pole cells which are the progenitors of the germline.

The protein resides in the nucleus. Its function is as follows. Unknown; apparently not involved in somatic sex determination. In Musca domestica (House fly), this protein is Sex-lethal homolog (SXL).